Consider the following 937-residue polypeptide: uncharacterized protein (937 aa).

T2 carries the post-translational modification N-acetylthreonine. Residues N281–K937 form a disordered region. Residues T290 to V308 are compositionally biased toward low complexity. The active-site Charge relay system is T292. Basic and acidic residues-rich tracts occupy residues E309–Q402, A411–A431, A469–A489, A512–A532, A600–A615, A667–A687, A738–A758, and A780–E872. The stretch at V345–E802 forms a coiled coil. Residues E887–E897 are compositionally biased toward acidic residues. Over residues A898–K924 the composition is skewed to low complexity. Over residues G925–K937 the composition is skewed to basic residues.

Belongs to the AB hydrolase superfamily.

This is an uncharacterized protein from Dictyostelium discoideum (Social amoeba).